The following is a 1427-amino-acid chain: Double-stranded DNA deaminase toxin A (1427 aa).

The next 2 helical transmembrane spans lie at 16–36 (ALAG…AVAF) and 43–63 (FGVA…LLSI). 4 YD repeats span residues 469–501 (RVVE…DGRT), 548–584 (YDDA…GPDG), 720–747 (NARG…GRLR), and 977–1008 (YDGA…ISRA). The interval 1264-1427 (IGLNGGANVY…SPKSPTKGGC (164 aa)) is C-terminal effector domain, has cytidine deaminase activity. 3 residues coordinate Zn(2+): histidine 1345, cysteine 1373, and cysteine 1376. A disordered region spans residues 1402-1427 (KRGATGETKVFTGNSNSPKSPTKGGC). Polar residues predominate over residues 1412-1421 (FTGNSNSPKS).

The protein belongs to the RHS/WapA nuclease family. In terms of assembly, the toxic domain forms a 1:1 complex with the DddI immunity protein.

The protein localises to the membrane. It catalyses the reaction a 2'-deoxycytidine in double-stranded DNA + H2O + H(+) = a 2'-deoxyuridine in double-stranded DNA + NH4(+). Its function is as follows. Toxic component of a toxin-immunity protein module, which functions as a cellular contact-dependent growth inhibition (CDI) system. CDI modules allow bacteria to communicate with and inhibit the growth of closely related neighboring bacteria in a contact-dependent fashion. Bacteria that have this module inhibit or kill bacteria without it, giving them a growth advantage. Probably specifically inhibited by cognate immunity protein DddI. The C-terminal 163 residue fragment has double-stranded DNA cytidine deaminase activity; it does not deaminate ssDNA, ssRNA or dsRNA. Leads to C:G to T:A conversions in deaminated DNA. Preferentially deaminates 5'-TC-3' substrates. In Burkholderia cenocepacia (strain H111), this protein is Double-stranded DNA deaminase toxin A.